Here is a 356-residue protein sequence, read N- to C-terminus: DNA polymerase IV (356 aa).

The 182-residue stretch at 6–187 folds into the UmuC domain; it reads IIHIDMDYFF…LDIGDFPGVG (182 aa). Asp-10 and Asp-105 together coordinate Mg(2+). Glu-106 is a catalytic residue.

Belongs to the DNA polymerase type-Y family. As to quaternary structure, monomer. It depends on Mg(2+) as a cofactor.

Its subcellular location is the cytoplasm. It catalyses the reaction DNA(n) + a 2'-deoxyribonucleoside 5'-triphosphate = DNA(n+1) + diphosphate. Poorly processive, error-prone DNA polymerase involved in untargeted mutagenesis. Copies undamaged DNA at stalled replication forks, which arise in vivo from mismatched or misaligned primer ends. These misaligned primers can be extended by PolIV. Exhibits no 3'-5' exonuclease (proofreading) activity. May be involved in translesional synthesis, in conjunction with the beta clamp from PolIII. This chain is DNA polymerase IV, found in Staphylococcus aureus (strain Mu50 / ATCC 700699).